Reading from the N-terminus, the 971-residue chain is UPF0182 protein RER_22310 (971 aa).

Transmembrane regions (helical) follow at residues 16 to 36 (ILLV…RLIG), 61 to 81 (FVLF…AMLL), 112 to 132 (LFGV…AQAN), 172 to 192 (WLFV…YVFG), 209 to 229 (VQLA…YWFD), 257 to 277 (AKLI…ASIF), and 286 to 306 (MAVA…PMIV). Residues 890–927 (GSAATVTQPAPDPDTGAQPETPTTPTAPAPPASSDDVT) form a disordered region.

It belongs to the UPF0182 family.

It is found in the cell membrane. The sequence is that of UPF0182 protein RER_22310 from Rhodococcus erythropolis (strain PR4 / NBRC 100887).